A 465-amino-acid chain; its full sequence is Ribosome biogenesis protein YTM1 (465 aa).

The ubiquitin-like (UBL) domain stretch occupies residues A18–R99. WD repeat units follow at residues L111–S153, G160–T198, G205–V242, G277–T317, T319–S358, G364–D404, and G427–A465. The segment at K235–L272 is disordered.

It belongs to the WD repeat WDR12/YTM1 family. As to quaternary structure, component of the NOP7 complex, composed of ERB1, NOP7 and YTM1. The complex is held together by ERB1, which interacts with NOP7 via its N-terminal domain and with YTM1 via a high-affinity interaction between the seven-bladed beta-propeller domains of the 2 proteins. The NOP7 complex associates with the 66S pre-ribosome. Interacts (via UBL domain) with MDN1 (via VWFA/MIDAS domain).

It is found in the nucleus. It localises to the nucleolus. Its subcellular location is the nucleoplasm. Functionally, component of the NOP7 complex, which is required for maturation of the 25S and 5.8S ribosomal RNAs and formation of the 60S ribosome. This Coccidioides immitis (strain RS) (Valley fever fungus) protein is Ribosome biogenesis protein YTM1.